A 276-amino-acid chain; its full sequence is C-type lectin domain family 12 member B (276 aa).

At 1–43 the chain is on the cytoplasmic side; the sequence is MSEEVTYATLTFQDSAGARNNRDGNNLRKRGHPAPSPIWRHAA. An ITIM motif motif is present at residues 5 to 10; it reads VTYATL. The residue at position 7 (Tyr7) is a Phosphotyrosine. The chain crosses the membrane as a helical; Signal-anchor for type II membrane protein span at residues 44 to 64; it reads LGLVTLCLMLLIGLVTLGMMF. At 65–276 the chain is on the extracellular side; it reads LQISNDINSD…AAPVKTEDLD (212 aa). N-linked (GlcNAc...) asparagine glycans are attached at residues Asn91, Asn176, and Asn237. The C-type lectin domain occupies 150-264; the sequence is YQNSCYYFTT…CSAEIFWICE (115 aa). Disulfide bonds link Cys172–Cys263 and Cys242–Cys255.

In terms of assembly, homodimer. Interacts (via ITIM motif) with PTPN6. Interacts (via ITIM motif) with PTPN11; this interaction triggers dephosphorylation and activation of PTPN11. N-glycosylated. As to expression, detected in colon, heart, kidney, liver, lung, mammary gland, ovary, spleen and testis. Expressed in melanocytes (at protein level).

The protein resides in the cell membrane. Inhibitory receptor postulated to negatively regulate immune and non-immune functions. Upon phosphorylation, recruits SH2 domain-containing PTPN6 and PTPN11 phosphatases to its ITIM motif and antagonizes activation signals. Although it inhibits KLRK1/NKG2D-mediated signaling, it does not bind known ligands of KLRK1/NKG2D and therefore is not its inhibitory counterpart. May limit activation of myeloid cell subsets in response to infection or tissue inflammation. May protect target cells against natural killer cell-mediated lysis. May negatively regulate cell cycle and differentiation of melanocytes via inactivation of STAT3. In Homo sapiens (Human), this protein is C-type lectin domain family 12 member B.